The following is a 351-amino-acid chain: Calcium homeostasis modulator 1 (351 aa).

Topologically, residues 1 to 20 are cytoplasmic; the sequence is MDKFRMMFQFLQSNQESFMN. A central pore region spans residues 9 to 36; the sequence is QFLQSNQESFMNGICGIMALASAQMYSS. The chain crosses the membrane as a helical span at residues 21–36; the sequence is GICGIMALASAQMYSS. Residues 37-48 lie on the Extracellular side of the membrane; that stretch reads FEFSCPCMPEYN. 2 cysteine pairs are disulfide-bonded: C41–C126 and C43–C160. The chain crosses the membrane as a helical span at residues 49-71; the sequence is YTYGIGLLIIPPIWFFLLGFVLN. The phospholipid-binding stretch occupies residues 62–69; that stretch reads WFFLLGFV. The Cytoplasmic segment spans residues 72 to 98; that stretch reads NNVSVLAEEWKRPTGRRTKDPSVLRYM. Residues 99 to 124 form a helical membrane-spanning segment; it reads LCSITQRSLIAPAVWVSVTLMDGKSF. C100 is lipidated: S-palmitoyl cysteine. Residues 104–116 form a phospholipid-binding region; it reads QRSLIAPAVWVSV. Residues 125 to 177 lie on the Extracellular side of the membrane; it reads LCAFSINLDIEKFGNASLVIGMTETEKLKFLARIPCKDLFEDNEVRVAATRYI. A glycan (N-linked (GlcNAc...) asparagine) is linked at N139. A helical membrane pass occupies residues 178–203; sequence KCISQACGWMFLLMMTFTAFLIRAIR. The segment at 189-199 is phospholipid-binding; it reads LLMMTFTAFLI. The Cytoplasmic portion of the chain corresponds to 204–351; that stretch reads PCFTQAAFLK…KEWAVYYSKV (148 aa). The S-palmitoyl cysteine moiety is linked to residue C205. The interval 259–281 is disordered; the sequence is HRHQSKDTSDAEEEEKQRSDEDK. Basic and acidic residues predominate over residues 263–281; sequence SKDTSDAEEEEKQRSDEDK.

The protein belongs to the CALHM family. As to quaternary structure, oligomerizes to form hexamers and octamers. Does not form gap junctions. Associates with CALHM3 as a pore-forming subunit in a hetero-hexameric channel complex. In terms of processing, N-glycosylated. Post-translationally, palmitoylated.

It localises to the cell membrane. Its subcellular location is the endoplasmic reticulum membrane. It is found in the basolateral cell membrane. The catalysed reaction is ATP(in) = ATP(out). The enzyme catalyses Ca(2+)(in) = Ca(2+)(out). It carries out the reaction Mg(2+)(in) = Mg(2+)(out). It catalyses the reaction Na(+)(in) = Na(+)(out). The catalysed reaction is K(+)(in) = K(+)(out). The enzyme catalyses Li(+)(in) = Li(+)(out). It carries out the reaction Rb(+)(in) = Rb(+)(out). It catalyses the reaction Cs(+)(in) = Cs(+)(out). The catalysed reaction is chloride(in) = chloride(out). With respect to regulation, activated in response to membrane depolarization and low extracellular Ca(2+) concentration. Inhibited by ruthenium red. Pore-forming subunit of a voltage-gated ion channel. Has poor ion selectivity and forms a wide pore that mediates permeation of small ions including Ca(2+), Na(+), K(+) and Cl(-), as well as larger ions such as ATP(4-). This chain is Calcium homeostasis modulator 1, found in Oryzias latipes (Japanese rice fish).